We begin with the raw amino-acid sequence, 209 residues long: PRA1 family protein A2 (209 aa).

4 consecutive transmembrane segments (helical) span residues 51 to 72, 76 to 98, 142 to 162, and 163 to 183; these read LYYY…ALVT, ALVG…AASF, RWVF…SSCG, and LLWV…HASI.

This sequence belongs to the PRA1 family.

It localises to the endosome membrane. Functionally, may be involved in both secretory and endocytic intracellular trafficking in the endosomal/prevacuolar compartments. This is PRA1 family protein A2 (PRA1A2) from Arabidopsis thaliana (Mouse-ear cress).